Here is a 185-residue protein sequence, read N- to C-terminus: Elongation factor P (185 aa).

Belongs to the elongation factor P family.

The protein resides in the cytoplasm. Its pathway is protein biosynthesis; polypeptide chain elongation. Its function is as follows. Involved in peptide bond synthesis. Stimulates efficient translation and peptide-bond synthesis on native or reconstituted 70S ribosomes in vitro. Probably functions indirectly by altering the affinity of the ribosome for aminoacyl-tRNA, thus increasing their reactivity as acceptors for peptidyl transferase. The polypeptide is Elongation factor P (Caldanaerobacter subterraneus subsp. tengcongensis (strain DSM 15242 / JCM 11007 / NBRC 100824 / MB4) (Thermoanaerobacter tengcongensis)).